The following is a 130-amino-acid chain: uncharacterized protein (130 aa).

2 stretches are compositionally biased toward polar residues: residues 1 to 27 and 36 to 46; these read MEIL…QPSQ and QAENQETAKNG. Disordered regions lie at residues 1 to 46 and 103 to 130; these read MEIL…AKNG and VSAQ…ELDL. Residues 27 to 51 adopt a coiled-coil conformation; the sequence is QDAHEKARQQAENQETAKNGMISQI.

This sequence belongs to the PDCD5 family.

This is an uncharacterized protein from Caenorhabditis elegans.